A 256-amino-acid chain; its full sequence is Type III pantothenate kinase (256 aa).

Residue 6-13 (DVGNSHIY) participates in ATP binding. Residues Tyr99 and 106–109 (GADR) each bind substrate. Asp108 functions as the Proton acceptor in the catalytic mechanism. Residue Asp129 coordinates K(+). Thr132 is an ATP binding site. Thr184 lines the substrate pocket.

This sequence belongs to the type III pantothenate kinase family. Homodimer. NH4(+) serves as cofactor. K(+) is required as a cofactor.

The protein resides in the cytoplasm. It catalyses the reaction (R)-pantothenate + ATP = (R)-4'-phosphopantothenate + ADP + H(+). The protein operates within cofactor biosynthesis; coenzyme A biosynthesis; CoA from (R)-pantothenate: step 1/5. In terms of biological role, catalyzes the phosphorylation of pantothenate (Pan), the first step in CoA biosynthesis. This Legionella pneumophila (strain Corby) protein is Type III pantothenate kinase.